Reading from the N-terminus, the 435-residue chain is uncharacterized protein (435 aa).

Serine 47 is subject to Phosphoserine. Disordered stretches follow at residues 174-210 (LKKKKESIKTAQTTEAQGADHNEEDEEDEEDEEDDED) and 290-372 (KAEA…EDNK). Residues 195 to 210 (NEEDEEDEEDEEDDED) are compositionally biased toward acidic residues. A compositionally biased stretch (basic and acidic residues) spans 290–304 (KAEATGEAHSKDVSA). Polar residues predominate over residues 308-318 (SANTTTSFDET). Basic and acidic residues-rich tracts occupy residues 322-340 (EDEKPKSEGAEEESKKEAN) and 347-361 (VADRKEDLKSNKVND).

It is found in the cytoplasm. This is an uncharacterized protein from Saccharomyces cerevisiae (strain ATCC 204508 / S288c) (Baker's yeast).